A 185-amino-acid polypeptide reads, in one-letter code: Elongation factor P (185 aa).

This sequence belongs to the elongation factor P family.

The protein resides in the cytoplasm. The protein operates within protein biosynthesis; polypeptide chain elongation. Its function is as follows. Involved in peptide bond synthesis. Stimulates efficient translation and peptide-bond synthesis on native or reconstituted 70S ribosomes in vitro. Probably functions indirectly by altering the affinity of the ribosome for aminoacyl-tRNA, thus increasing their reactivity as acceptors for peptidyl transferase. This Bacillus anthracis (strain CDC 684 / NRRL 3495) protein is Elongation factor P.